Reading from the N-terminus, the 294-residue chain is Probable ABC transporter permease protein YqgI (294 aa).

The next 6 membrane-spanning stretches (helical) occupy residues 14–34 (FGLCAAIIAAILVGLFSYIII), 66–86 (FYILFITMLITIPLGVGGGVF), 99–121 (FIRTCIEVLSSLPSIVIGMFGLL), 126–148 (LTGWGYTIIGGALALTVFNLPVM), 190–210 (IITGAILASGRVFGEAAALLF), and 260–280 (AIANGGSAVLVISVLVFNLAA). Residues 62–280 (LFNSFYILFI…ISVLVFNLAA (219 aa)) enclose the ABC transmembrane type-1 domain.

This sequence belongs to the binding-protein-dependent transport system permease family. CysTW subfamily.

Its subcellular location is the cell membrane. Part of the binding-protein-dependent transport system YqgGHIJK. Probably responsible for the translocation of the substrate across the membrane. This is Probable ABC transporter permease protein YqgI (yqgI) from Bacillus subtilis (strain 168).